Reading from the N-terminus, the 122-residue chain is Large ribosomal subunit protein uL14 (122 aa).

The protein belongs to the universal ribosomal protein uL14 family. As to quaternary structure, part of the 50S ribosomal subunit. Forms a cluster with proteins L3 and L19. In the 70S ribosome, L14 and L19 interact and together make contacts with the 16S rRNA in bridges B5 and B8.

Its function is as follows. Binds to 23S rRNA. Forms part of two intersubunit bridges in the 70S ribosome. In Wolinella succinogenes (strain ATCC 29543 / DSM 1740 / CCUG 13145 / JCM 31913 / LMG 7466 / NCTC 11488 / FDC 602W) (Vibrio succinogenes), this protein is Large ribosomal subunit protein uL14.